Consider the following 138-residue polypeptide: Protein NrdI (138 aa).

Belongs to the NrdI family.

Its function is as follows. Probably involved in ribonucleotide reductase function. This Mycobacterium leprae (strain TN) protein is Protein NrdI.